Here is a 506-residue protein sequence, read N- to C-terminus: UDP-glycosyltransferase eriJ (506 aa).

It belongs to the UDP-glycosyltransferase family.

The catalysed reaction is 11-O-acetylcyathatriol + UDP-alpha-D-xylose = erinacine Q + UDP + H(+). It catalyses the reaction 11-O-acetylcyathatriol + UDP-alpha-D-glucose = erinacine Q2 + UDP + H(+). Its pathway is secondary metabolite biosynthesis. UDP-glycosyltransferase; part of the gene cluster that mediates the biosynthesis of erinacines, cyathane-xylosides that show unique biological activities, including leishmanicidal activity, stimulating activity for nerve growth-factor synthesis, and agonistic activity toward the kappa opioid receptor. Within the pathway, eriJ tranfers xylose from UDP-xylose onto C-14 of 11-O-acetyl-cyathatriol to form eracine Q, and, at a lower rate, glucose from UDP-D-glucose to produce eracine Q2. The first step of the erinacines biosynthesis pathway is catalyzed by the geranylgeranyl diphosphate (GGPP) synthase eriE via conversion of farnesyl pyrophosphate and isopentyl pyrophosphate into geranylgeranyl pyrophosphate (GGPP). GGPP is then substrate of the diterpene cyclase eriG for the production of cyatha-3,12-diene. The cytochrome P450 monooxygenase eriI then hydroxylates cyatha-3,12-diene at C-14 of the seven-membered ring to produce erinacol, which is further hydroxylated at C-15 by the cytochrome P450 monooxygenase eriC to yield cyathadiol. The cytochrome P450 monooxygenase eriA then catalyzes C-11 hydroxylation in the presence of the short chain dehydrogenase/reductase (SDR) eriH, which leads to the production of cyathatriol. The acetyltransferase eriL converts cyathatriol into 11-O-acetyl-cyathatriol. The SDR eriH catalyzes further oxidation of 11-O-acetyl-cyathatriol into 1-O-acetylcyathin A3. Finally, the glycosyl transferase eriJ tranfers xylose from UDP-xylose onto C-14 of 11-O-acetyl-cyathatriol to form eracine Q. EriJ is also able to convert 11-O-acetyl-cyathatriol to eracine Q2 by using UDP-D-glucose as cosubstrate, but at a lower rate. In Hericium erinaceus (Lion's mane mushroom), this protein is UDP-glycosyltransferase eriJ.